Consider the following 161-residue polypeptide: Large ribosomal subunit protein uL10 (161 aa).

It belongs to the universal ribosomal protein uL10 family. As to quaternary structure, part of the ribosomal stalk of the 50S ribosomal subunit. The N-terminus interacts with L11 and the large rRNA to form the base of the stalk. The C-terminus forms an elongated spine to which L12 dimers bind in a sequential fashion forming a multimeric L10(L12)X complex.

Forms part of the ribosomal stalk, playing a central role in the interaction of the ribosome with GTP-bound translation factors. This is Large ribosomal subunit protein uL10 from Malacoplasma penetrans (strain HF-2) (Mycoplasma penetrans).